The sequence spans 105 residues: Chloroacetanilide N-alkylformylase 1, ferredoxin component (105 aa).

Positions 2-105 constitute a 2Fe-2S ferredoxin-type domain; that stretch reads PTIIVTTRDG…GLRVAIAPED (104 aa). C40, C46, C49, and C86 together coordinate [2Fe-2S] cluster.

Belongs to the adrenodoxin/putidaredoxin family. In terms of assembly, the chloroacetanilide N-alkylformylase multicomponent enzyme system is composed of an oxygenase component (CndA) and an electron transfer component formed by a ferredoxin reductase (CndC1) and a ferredoxin (CndB1). In vitro, chloroacetanilide N-alkylformylase assays in which CndB1 is substituted for CndB2 demonstrate that the two enzymes possess nearly identical activities. [2Fe-2S] cluster is required as a cofactor.

Component of the chloroacetanilide N-alkylformylase multicomponent enzyme system involved in the degradation of chloroacetanilide herbicides (N-alkoxyalkyl-N-chloroacetyl-substituted aniline derivatives). In vitro, functions as an intermediate electron transfer protein. In Rhizorhabdus wittichii (strain DC-6 / KACC 16600) (Sphingomonas wittichii), this protein is Chloroacetanilide N-alkylformylase 1, ferredoxin component.